A 576-amino-acid polypeptide reads, in one-letter code: Glutamine--tRNA ligase (576 aa).

The 'HIGH' region motif lies at 47 to 57 (PEPNGYLHIGH). Residues 48-50 (EPN) and 54-60 (HIGHAKS) contribute to the ATP site. L-glutamine-binding residues include Asp80 and Tyr229. Residues Thr248 and 283–284 (RL) each bind ATP. The short motif at 290-294 (ITSKR) is the 'KMSKS' region element.

It belongs to the class-I aminoacyl-tRNA synthetase family. Monomer.

The protein resides in the cytoplasm. The enzyme catalyses tRNA(Gln) + L-glutamine + ATP = L-glutaminyl-tRNA(Gln) + AMP + diphosphate. This chain is Glutamine--tRNA ligase, found in Ralstonia pickettii (strain 12J).